We begin with the raw amino-acid sequence, 212 residues long: Peptide methionine sulfoxide reductase MsrA (212 aa).

Residue Cys52 is part of the active site.

This sequence belongs to the MsrA Met sulfoxide reductase family.

It catalyses the reaction L-methionyl-[protein] + [thioredoxin]-disulfide + H2O = L-methionyl-(S)-S-oxide-[protein] + [thioredoxin]-dithiol. It carries out the reaction [thioredoxin]-disulfide + L-methionine + H2O = L-methionine (S)-S-oxide + [thioredoxin]-dithiol. Has an important function as a repair enzyme for proteins that have been inactivated by oxidation. Catalyzes the reversible oxidation-reduction of methionine sulfoxide in proteins to methionine. The polypeptide is Peptide methionine sulfoxide reductase MsrA (Salmonella agona (strain SL483)).